The following is a 461-amino-acid chain: Probable outer membrane lipoprotein SilC (461 aa).

The signal sequence occupies residues 1–17; sequence MFKLKLLSISTIFILAG. C18 is lipidated: N-palmitoyl cysteine. C18 carries S-diacylglycerol cysteine lipidation.

This sequence belongs to the outer membrane factor (OMF) (TC 1.B.17) family.

The protein localises to the cell outer membrane. Component of the sil cation-efflux system that confers resistance to silver. May be part of a three-component cation/proton antiporter. The polypeptide is Probable outer membrane lipoprotein SilC (silC) (Salmonella typhimurium).